The chain runs to 100 residues: ATP phosphoribosyltransferase (100 aa).

Belongs to the ATP phosphoribosyltransferase family. Long subfamily. In terms of assembly, equilibrium between an active dimeric form, an inactive hexameric form and higher aggregates. Interconversion between the various forms is largely reversible and is influenced by the natural substrates and inhibitors of the enzyme. Mg(2+) serves as cofactor.

The protein resides in the cytoplasm. The catalysed reaction is 1-(5-phospho-beta-D-ribosyl)-ATP + diphosphate = 5-phospho-alpha-D-ribose 1-diphosphate + ATP. The protein operates within amino-acid biosynthesis; L-histidine biosynthesis; L-histidine from 5-phospho-alpha-D-ribose 1-diphosphate: step 1/9. Its activity is regulated as follows. Feedback inhibited by histidine. Catalyzes the condensation of ATP and 5-phosphoribose 1-diphosphate to form N'-(5'-phosphoribosyl)-ATP (PR-ATP). Has a crucial role in the pathway because the rate of histidine biosynthesis seems to be controlled primarily by regulation of HisG enzymatic activity. This is ATP phosphoribosyltransferase (hisG) from Klebsiella pneumoniae.